A 96-amino-acid chain; its full sequence is Small ribosomal subunit protein bS6 (96 aa).

It belongs to the bacterial ribosomal protein bS6 family.

Its function is as follows. Binds together with bS18 to 16S ribosomal RNA. The polypeptide is Small ribosomal subunit protein bS6 (Streptococcus pneumoniae serotype 19F (strain G54)).